A 29-amino-acid polypeptide reads, in one-letter code: Kalata-B4 (29 aa).

Residues G1 to D29 constitute a cross-link (cyclopeptide (Gly-Asp)). Intrachain disulfides connect C5–C19, C9–C21, and C14–C26.

Post-translationally, this is a cyclic peptide.

Probably participates in a plant defense mechanism. The polypeptide is Kalata-B4 (Oldenlandia affinis).